The following is a 389-amino-acid chain: Rhizopuspepsin-1 (389 aa).

The signal sequence occupies residues 1 to 21 (MKFTLISSCVALAAMTLAVEA). The propeptide at 22–66 (APNGKKINIPLAKNNSYKPSAKNALNKALAKYNRRKVGSGGITTE) is activation peptide. The region spanning 82–385 (YYGEVTVGTP…NQEVPEVQIA (304 aa)) is the Peptidase A1 domain. The active site involves Asp-100. Residues Cys-113 and Cys-116 are joined by a disulfide bond. The active site involves Asp-283. The cysteines at positions 317 and 350 are disulfide-linked.

Belongs to the peptidase A1 family.

The catalysed reaction is Hydrolysis of proteins with broad specificity similar to that of pepsin A, preferring hydrophobic residues at P1 and P1'. Clots milk and activates trypsinogen. Does not cleave 4-Gln-|-His-5, but does cleave 10-His-|-Leu-11 and 12-Val-|-Glu-13 in B chain of insulin.. In Rhizopus niveus, this protein is Rhizopuspepsin-1 (RNAP).